The primary structure comprises 177 residues: ATP synthase subunit delta (177 aa).

The protein belongs to the ATPase delta chain family. In terms of assembly, F-type ATPases have 2 components, F(1) - the catalytic core - and F(0) - the membrane proton channel. F(1) has five subunits: alpha(3), beta(3), gamma(1), delta(1), epsilon(1). F(0) has three main subunits: a(1), b(2) and c(10-14). The alpha and beta chains form an alternating ring which encloses part of the gamma chain. F(1) is attached to F(0) by a central stalk formed by the gamma and epsilon chains, while a peripheral stalk is formed by the delta and b chains.

The protein localises to the cell inner membrane. Functionally, f(1)F(0) ATP synthase produces ATP from ADP in the presence of a proton or sodium gradient. F-type ATPases consist of two structural domains, F(1) containing the extramembraneous catalytic core and F(0) containing the membrane proton channel, linked together by a central stalk and a peripheral stalk. During catalysis, ATP synthesis in the catalytic domain of F(1) is coupled via a rotary mechanism of the central stalk subunits to proton translocation. This protein is part of the stalk that links CF(0) to CF(1). It either transmits conformational changes from CF(0) to CF(1) or is implicated in proton conduction. This is ATP synthase subunit delta from Escherichia coli O81 (strain ED1a).